A 224-amino-acid polypeptide reads, in one-letter code: Small ribosomal subunit protein uS3 (224 aa).

Positions 39-107 constitute a KH type-2 domain; the sequence is VRKYIQNALA…PVHINIEEIR (69 aa).

Belongs to the universal ribosomal protein uS3 family. As to quaternary structure, part of the 30S ribosomal subunit. Forms a tight complex with proteins S10 and S14.

Functionally, binds the lower part of the 30S subunit head. Binds mRNA in the 70S ribosome, positioning it for translation. The chain is Small ribosomal subunit protein uS3 from Saccharophagus degradans (strain 2-40 / ATCC 43961 / DSM 17024).